Here is a 226-residue protein sequence, read N- to C-terminus: EEF1A lysine methyltransferase 3 (226 aa).

S-adenosyl-L-methionine contacts are provided by residues Trp-57, Gly-83–Gly-85, Asp-104, Trp-133, and Ala-150.

It belongs to the methyltransferase superfamily. METTL21 family. Interacts with members of the heat shock protein 70 and 90 families and of the TCP-1 chaperonin family, as well as with HSPD1, STIP1 and tubulin; at least some of these proteins may be methylation substrates.

The protein localises to the cytoplasm. The protein resides in the cytoskeleton. It localises to the microtubule organizing center. It is found in the centrosome. It carries out the reaction L-lysyl-[protein] + 3 S-adenosyl-L-methionine = N(6),N(6),N(6)-trimethyl-L-lysyl-[protein] + 3 S-adenosyl-L-homocysteine + 3 H(+). It catalyses the reaction L-lysyl-[protein] + S-adenosyl-L-methionine = N(6)-methyl-L-lysyl-[protein] + S-adenosyl-L-homocysteine + H(+). The enzyme catalyses N(6)-methyl-L-lysyl-[protein] + S-adenosyl-L-methionine = N(6),N(6)-dimethyl-L-lysyl-[protein] + S-adenosyl-L-homocysteine + H(+). The catalysed reaction is N(6),N(6)-dimethyl-L-lysyl-[protein] + S-adenosyl-L-methionine = N(6),N(6),N(6)-trimethyl-L-lysyl-[protein] + S-adenosyl-L-homocysteine + H(+). Protein-lysine methyltransferase that selectively mono-, di- and trimethylates 'Lys-165' of the translation elongation factors EEF1A1 and EEF1A2 in an aminoacyl-tRNA and GTP-dependent manner. EEF1A1 methylation by EEF1AKMT3 is dynamic as well as inducible by stress conditions, such as ER-stress, and plays a regulatory role on mRNA translation. In Bos taurus (Bovine), this protein is EEF1A lysine methyltransferase 3.